The primary structure comprises 637 residues: Sec1 family domain-containing protein 1 (637 aa).

3 positions are modified to phosphoserine: Ser32, Ser298, and Ser523.

It belongs to the STXBP/unc-18/SEC1 family. In terms of assembly, interacts with STX17. Interacts with the COG complex via COG4. Interacts with STX5A. As to expression, highly expressed in testis. Detected at lower levels in brain, astrocytes, heart and small intestine.

The protein localises to the cytoplasm. It localises to the endoplasmic reticulum membrane. The protein resides in the golgi apparatus. It is found in the golgi stack membrane. Its function is as follows. Plays a role in SNARE-pin assembly and Golgi-to-ER retrograde transport via its interaction with COG4. Involved in vesicular transport between the endoplasmic reticulum and the Golgi. The protein is Sec1 family domain-containing protein 1 (Scfd1) of Rattus norvegicus (Rat).